We begin with the raw amino-acid sequence, 257 residues long: tRNA (guanine-N(7)-)-methyltransferase (257 aa).

A disordered region spans residues 1–42; that stretch reads MTVVVSDHQNPRPPGDDAAPLGRTGNRDRPPGSFFGRRKGHR. S-adenosyl-L-methionine is bound by residues glutamate 84, glutamate 109, aspartate 136, and aspartate 158. The active site involves aspartate 158. Substrate is bound by residues lysine 162 and aspartate 194.

It belongs to the class I-like SAM-binding methyltransferase superfamily. TrmB family.

It carries out the reaction guanosine(46) in tRNA + S-adenosyl-L-methionine = N(7)-methylguanosine(46) in tRNA + S-adenosyl-L-homocysteine. The protein operates within tRNA modification; N(7)-methylguanine-tRNA biosynthesis. Catalyzes the formation of N(7)-methylguanine at position 46 (m7G46) in tRNA. This is tRNA (guanine-N(7)-)-methyltransferase from Nitrobacter winogradskyi (strain ATCC 25391 / DSM 10237 / CIP 104748 / NCIMB 11846 / Nb-255).